The sequence spans 311 residues: Short chain dehydrogenase opdN (311 aa).

Residues Leu48, Lys73, Glu96, Asn123, Tyr217, and Lys221 each contribute to the NADP(+) site. Tyr217 serves as the catalytic Proton donor. Lys221 (lowers pKa of active site Tyr) is an active-site residue.

It belongs to the short-chain dehydrogenases/reductases (SDR) family.

It functions in the pathway secondary metabolite biosynthesis. In terms of biological role, short chain dehydrogenase; part of the gene cluster that mediates the biosynthesis of oxopyrrolidines, polyketide-amino acid hybrid compounds with feature structures of tetramic acid. Does not seem to play a role in oxopyrrolidines A and B biosynthesis. May be involved in further modifications of these oxopyrrolidines. This is Short chain dehydrogenase opdN from Penicillium oxalicum (strain 114-2 / CGMCC 5302) (Penicillium decumbens).